The following is a 172-amino-acid chain: Large ribosomal subunit protein uL10 (172 aa).

It belongs to the universal ribosomal protein uL10 family. As to quaternary structure, part of the ribosomal stalk of the 50S ribosomal subunit. The N-terminus interacts with L11 and the large rRNA to form the base of the stalk. The C-terminus forms an elongated spine to which L12 dimers bind in a sequential fashion forming a multimeric L10(L12)X complex.

Its function is as follows. Forms part of the ribosomal stalk, playing a central role in the interaction of the ribosome with GTP-bound translation factors. This chain is Large ribosomal subunit protein uL10 (rplJ), found in Liberibacter africanus (Citrus greening disease).